The sequence spans 271 residues: MLTKKPEINTILQVTPDPHSLPAAMATEDLHVYYGDNHAIKGVDLTFPENKVTALIGPSGCGKSTYLRALNRMNDEIDGCRMEGQILYDGININRKEVDLYNVRKEIGMVFQKPNPFTKSIYENVAFGLKRHGMKNKKEIMERVEKSLRRAALWDEVKDDLGKSALSLSGGQQQRLCIARAVAMQPKVLLLDEPASALDPISTSKIEDLINELKNKYTIIIVTHNMQQAARVSDYTSFFYLGEVVEFSGTSELFTNPQEKQTEDYISGNFG.

In terms of domain architecture, ABC transporter spans methionine 25–isoleucine 266. Residue glycine 57 to serine 64 participates in ATP binding.

This sequence belongs to the ABC transporter superfamily. Phosphate importer (TC 3.A.1.7) family. The complex is composed of two ATP-binding proteins (PstB), two transmembrane proteins (PstC and PstA) and a solute-binding protein (PstS).

The protein resides in the cell membrane. It carries out the reaction phosphate(out) + ATP + H2O = ADP + 2 phosphate(in) + H(+). Part of the ABC transporter complex PstSACB involved in phosphate import. Responsible for energy coupling to the transport system. This is Phosphate import ATP-binding protein PstB 2 from Listeria monocytogenes serovar 1/2a (strain ATCC BAA-679 / EGD-e).